The chain runs to 195 residues: Probable GTP-binding protein EngB (195 aa).

The EngB-type G domain maps to 24 to 195 (ELPEIALAGR…EAWDAILEKL (172 aa)). GTP-binding positions include 32–39 (GRSNVGKS), 59–63 (GKTQL), 77–80 (DVPG), 144–147 (TKAD), and 176–178 (FSS). The Mg(2+) site is built by serine 39 and threonine 61.

The protein belongs to the TRAFAC class TrmE-Era-EngA-EngB-Septin-like GTPase superfamily. EngB GTPase family. The cofactor is Mg(2+).

Functionally, necessary for normal cell division and for the maintenance of normal septation. This chain is Probable GTP-binding protein EngB, found in Streptococcus pneumoniae serotype 4 (strain ATCC BAA-334 / TIGR4).